A 91-amino-acid polypeptide reads, in one-letter code: Small ribosomal subunit protein uS17 (91 aa).

It belongs to the universal ribosomal protein uS17 family. In terms of assembly, part of the 30S ribosomal subunit.

Functionally, one of the primary rRNA binding proteins, it binds specifically to the 5'-end of 16S ribosomal RNA. The chain is Small ribosomal subunit protein uS17 from Psychrobacter cryohalolentis (strain ATCC BAA-1226 / DSM 17306 / VKM B-2378 / K5).